Reading from the N-terminus, the 513-residue chain is E3 ubiquitin-protein ligase XBAT33 (513 aa).

5 ANK repeats span residues 44–73 (GLNS…DVNS), 77–106 (CGQT…NVTR), 111–140 (AGRT…PSDK), 171–200 (GGIT…NVSA), and 214–244 (AGST…KMTL). Residues 312-362 (CAVCLERTCTVAAEGCEHQLCVRCALYLCSSSNVPSVTVGPPGSIPCPLCR) form an RING-type zinc finger. Disordered stretches follow at residues 397–417 (DTTD…SKTR) and 455–483 (HGTE…EEGQ). Composition is skewed to basic and acidic residues over residues 455-466 (HGTERHSEEHVE) and 474-483 (TEQEKIEEGQ).

It catalyses the reaction S-ubiquitinyl-[E2 ubiquitin-conjugating enzyme]-L-cysteine + [acceptor protein]-L-lysine = [E2 ubiquitin-conjugating enzyme]-L-cysteine + N(6)-ubiquitinyl-[acceptor protein]-L-lysine.. It functions in the pathway protein modification; protein ubiquitination. Functionally, possesses E3 ubiquitin-protein ligase activity when associated with the E2 enzyme UBC8 in vitro. This is E3 ubiquitin-protein ligase XBAT33 (XBAT33) from Arabidopsis thaliana (Mouse-ear cress).